A 226-amino-acid polypeptide reads, in one-letter code: ATP synthase F(0) complex subunit a (226 aa).

6 helical membrane-spanning segments follow: residues 6-26, 68-88, 97-117, 138-158, 164-184, and 189-209; these read FASF…IIMF, WTLM…LGLL, QLSM…ITGF, IPML…ALAV, ITAG…LMNI, and ATIT…VALI.

It belongs to the ATPase A chain family. As to quaternary structure, component of the ATP synthase complex composed at least of ATP5F1A/subunit alpha, ATP5F1B/subunit beta, ATP5MC1/subunit c (homooctomer), MT-ATP6/subunit a, MT-ATP8/subunit 8, ATP5ME/subunit e, ATP5MF/subunit f, ATP5MG/subunit g, ATP5MK/subunit k, ATP5MJ/subunit j, ATP5F1C/subunit gamma, ATP5F1D/subunit delta, ATP5F1E/subunit epsilon, ATP5PF/subunit F6, ATP5PB/subunit b, ATP5PD/subunit d, ATP5PO/subunit OSCP. ATP synthase complex consists of a soluble F(1) head domain (subunits alpha(3) and beta(3)) - the catalytic core - and a membrane F(0) domain - the membrane proton channel (subunits c, a, 8, e, f, g, k and j). These two domains are linked by a central stalk (subunits gamma, delta, and epsilon) rotating inside the F1 region and a stationary peripheral stalk (subunits F6, b, d, and OSCP). Interacts with DNAJC30; interaction is direct.

Its subcellular location is the mitochondrion inner membrane. The enzyme catalyses H(+)(in) = H(+)(out). In terms of biological role, subunit a, of the mitochondrial membrane ATP synthase complex (F(1)F(0) ATP synthase or Complex V) that produces ATP from ADP in the presence of a proton gradient across the membrane which is generated by electron transport complexes of the respiratory chain. ATP synthase complex consist of a soluble F(1) head domain - the catalytic core - and a membrane F(1) domain - the membrane proton channel. These two domains are linked by a central stalk rotating inside the F(1) region and a stationary peripheral stalk. During catalysis, ATP synthesis in the catalytic domain of F(1) is coupled via a rotary mechanism of the central stalk subunits to proton translocation. With the subunit c (ATP5MC1), forms the proton-conducting channel in the F(0) domain, that contains two crucial half-channels (inlet and outlet) that facilitate proton movement from the mitochondrial intermembrane space (IMS) into the matrix. Protons are taken up via the inlet half-channel and released through the outlet half-channel, following a Grotthuss mechanism. The protein is ATP synthase F(0) complex subunit a of Mus musculus (Mouse).